The following is a 769-amino-acid chain: DNA helicase/primase complex-associated protein (769 aa).

The protein belongs to the herpesviridae HEPA family. In terms of assembly, associates with the primase and the helicase to form the helicase-primase complex. Interacts with the origin-binding protein. Interacts with the polymerase catalytic subunit.

Its subcellular location is the host nucleus. Component of the helicase/primase complex. Unwinds the DNA at the replication forks and generates single-stranded DNA for both leading and lagging strand synthesis. The primase synthesizes short RNA primers on the lagging strand that the polymerase presumably elongates using dNTPs. The primase-associated factor has no known catalytic activity in the complex and may serve to facilitate the formation of the replisome by directly interacting with the origin-binding protein and the polymerase. The chain is DNA helicase/primase complex-associated protein (MDV020) from Gallus gallus (Chicken).